Reading from the N-terminus, the 430-residue chain is MGEAAVAEGPCPLLEDSFTRFSSQSNVYGLAGGADGRGELLAATLKGKVLGFRYQDLRQKIRPVAKELQFNYIPVDAEIVSIDTFNKSPPKRGLVVGITFIKDSGDKGSPFLNIYCDYEPGSEYNLDSIAESCLNLELQFTPFQLCHAEVQVGDQLETVFLLSGNDPAIHLYKENEGLHQFEEQPVENLFPELTNLTSSVLWLDVHNLPGSSQRLSALGCQSGYVRVAHVDQKNQEILQTWTIQQDGPISRVIVFSLSASEATQDSPQQEGYSLLVASMLEPAVVYWDLLNKGLDDQLLLPGSDQFDSVLCGLVTDVDLDGQLEVLVATYGQELLCYKYRGLPEDSRGFRLLWRRSFASPLLAMAHVDLTGDGLRELAVISLKGVHILQHSLIQASELVLTRLRHQVEQRKHQQGLGDRVGPRPVEHPAS.

Residues 410-430 (RKHQQGLGDRVGPRPVEHPAS) are disordered. Over residues 420 to 430 (VGPRPVEHPAS) the composition is skewed to basic and acidic residues.

In terms of assembly, part of the KICSTOR complex composed of KPTN, ITFG2, KICS2 and SZT2. SZT2 probably serves as a link between the other three proteins in the KICSTOR complex and mediates the direct interaction with the GATOR1 complex. May associate with F-actin filaments.

The protein localises to the lysosome membrane. Its subcellular location is the cell projection. It localises to the lamellipodium. The protein resides in the stereocilium. Functionally, as part of the KICSTOR complex functions in the amino acid-sensing branch of the TORC1 signaling pathway. Recruits, in an amino acid-independent manner, the GATOR1 complex to the lysosomal membranes and allows its interaction with GATOR2 and the RAG GTPases. Functions upstream of the RAG GTPases and is required to negatively regulate mTORC1 signaling in absence of amino acids. In absence of the KICSTOR complex mTORC1 is constitutively localized to the lysosome and activated. The KICSTOR complex is also probably involved in the regulation of mTORC1 by glucose. This Mus musculus (Mouse) protein is KICSTOR complex protein kaptin.